The chain runs to 346 residues: N(4)-(beta-N-acetylglucosaminyl)-L-asparaginase (346 aa).

Residues 1 to 23 form the signal peptide; it reads MARKSNLPVLLVPFLLCQALVRC. Serine 24 bears the Blocked amino end (Ser) mark. Asparagine 38 is a glycosylation site (N-linked (GlcNAc...) asparagine). Cystine bridges form between cysteine 64/cysteine 69 and cysteine 163/cysteine 179. Threonine 206 (nucleophile) is an active-site residue. Substrate is bound by residues 234 to 237 and 257 to 260; these read RVGD and TGNG. A disulfide bond links cysteine 286 and cysteine 306. N-linked (GlcNAc...) asparagine glycosylation is present at asparagine 308. An intrachain disulfide couples cysteine 317 to cysteine 345.

The protein belongs to the Ntn-hydrolase family. In terms of assembly, heterotetramer of two alpha and two beta chains arranged as a dimer of alpha/beta heterodimers. Post-translationally, cleaved into an alpha and beta chain by autocatalysis; this activates the enzyme. The N-terminal residue of the beta subunit is responsible for the nucleophile hydrolase activity. N-glycosylated.

It is found in the lysosome. It carries out the reaction N(4)-(beta-N-acetyl-D-glucosaminyl)-L-asparagine + H2O = N-acetyl-beta-D-glucosaminylamine + L-aspartate + H(+). In terms of biological role, cleaves the GlcNAc-Asn bond which joins oligosaccharides to the peptide of asparagine-linked glycoproteins. The sequence is that of N(4)-(beta-N-acetylglucosaminyl)-L-asparaginase (AGA) from Homo sapiens (Human).